A 298-amino-acid chain; its full sequence is Nitrogenase iron protein (298 aa).

ATP is bound at residue G13 to S20. C101 is a [4Fe-4S] cluster binding site. Position 104 is an ADP-ribosylarginine; by dinitrogenase reductase ADP-ribosyltransferase (R104). Position 135 (C135) interacts with [4Fe-4S] cluster.

Belongs to the NifH/BchL/ChlL family. As to quaternary structure, homodimer. It depends on [4Fe-4S] cluster as a cofactor. The reversible ADP-ribosylation of Arg-104 inactivates the nitrogenase reductase and regulates nitrogenase activity.

The catalysed reaction is N2 + 8 reduced [2Fe-2S]-[ferredoxin] + 16 ATP + 16 H2O = H2 + 8 oxidized [2Fe-2S]-[ferredoxin] + 2 NH4(+) + 16 ADP + 16 phosphate + 6 H(+). In terms of biological role, the key enzymatic reactions in nitrogen fixation are catalyzed by the nitrogenase complex, which has 2 components: the iron protein and the molybdenum-iron protein. The chain is Nitrogenase iron protein from Cyanothece sp. (strain PCC 7425 / ATCC 29141).